The following is a 473-amino-acid chain: Cysteine--tRNA ligase (473 aa).

C28 contributes to the Zn(2+) binding site. The 'HIGH' region motif lies at 30 to 40; it reads MTVYDFCHIGH. Residues C212, H237, and E241 each contribute to the Zn(2+) site. Residues 277–281 carry the 'KMSKS' region motif; the sequence is KMSKS. K280 serves as a coordination point for ATP.

Belongs to the class-I aminoacyl-tRNA synthetase family. As to quaternary structure, monomer. It depends on Zn(2+) as a cofactor.

Its subcellular location is the cytoplasm. It carries out the reaction tRNA(Cys) + L-cysteine + ATP = L-cysteinyl-tRNA(Cys) + AMP + diphosphate. In Polynucleobacter necessarius subsp. necessarius (strain STIR1), this protein is Cysteine--tRNA ligase.